Here is a 342-residue protein sequence, read N- to C-terminus: UDP-3-O-acylglucosamine N-acyltransferase (342 aa).

The Proton acceptor role is filled by His253.

The protein belongs to the transferase hexapeptide repeat family. LpxD subfamily. As to quaternary structure, homotrimer.

The enzyme catalyses a UDP-3-O-[(3R)-3-hydroxyacyl]-alpha-D-glucosamine + a (3R)-hydroxyacyl-[ACP] = a UDP-2-N,3-O-bis[(3R)-3-hydroxyacyl]-alpha-D-glucosamine + holo-[ACP] + H(+). Its pathway is bacterial outer membrane biogenesis; LPS lipid A biosynthesis. Its function is as follows. Catalyzes the N-acylation of UDP-3-O-acylglucosamine using 3-hydroxyacyl-ACP as the acyl donor. Is involved in the biosynthesis of lipid A, a phosphorylated glycolipid that anchors the lipopolysaccharide to the outer membrane of the cell. This Rickettsia bellii (strain RML369-C) protein is UDP-3-O-acylglucosamine N-acyltransferase.